The primary structure comprises 462 residues: Probable peptidoglycan glycosyltransferase FtsW (462 aa).

Topologically, residues 1-63 (MGCIVCSDGI…VRDGRKFDAP (63 aa)) are cytoplasmic. A helical transmembrane segment spans residues 64-84 (LLWMVVLMTAFGLLMIYSASV). The Periplasmic segment spans residues 85 to 97 (YLASKEGGDQFFY). A helical transmembrane segment spans residues 98 to 118 (LTRQAGFVVAGLIASGFLWFL). The Cytoplasmic segment spans residues 119 to 125 (CRMRTWR). Residues 126-146 (RLVPWIFALSGLLLVAVLIAG) traverse the membrane as a helical segment. Residues 147 to 160 (REINGATRWIPLGP) lie on the Periplasmic side of the membrane. Residues 161-181 (LNFQPTELFKLAVILYLASLF) traverse the membrane as a helical segment. At 182–227 (TRREEVLRSMESLGWQSIWRGTANLIMSATNPQARRETLEMYGRFR) the chain is on the cytoplasmic side. A run of 2 helical transmembrane segments spans residues 228–248 (AIIL…VQPD) and 249–269 (FGSF…AGLP). The Cytoplasmic segment spans residues 270 to 271 (WK). A helical transmembrane segment spans residues 272 to 292 (YFFVLVGSVLGGMVLMITAAP). Topologically, residues 293–348 (YRVQRVVAFLDPWKDPQGAGYQLTHSLMAIGRGEWFGMGLGASLSKRGFLPEAHTD) are periplasmic. A helical transmembrane segment spans residues 349-369 (FIFAIIAEEFGFFGMCVLIFC). The Cytoplasmic portion of the chain corresponds to 370 to 386 (YGWLVVRAFSIGKQSRD). A helical transmembrane segment spans residues 387 to 409 (LGLTFNAYIASGIGIWIGIQSFF). At 410 to 424 (NIGVNIGALPTKGLT) the chain is on the periplasmic side. A helical transmembrane segment spans residues 425-445 (LPLMSYGGSSVFFMLISMMLL). Residues 446-462 (LRIDYENRRKMRGYRVE) lie on the Cytoplasmic side of the membrane.

It belongs to the SEDS family. FtsW subfamily.

The protein localises to the cell inner membrane. The catalysed reaction is [GlcNAc-(1-&gt;4)-Mur2Ac(oyl-L-Ala-gamma-D-Glu-L-Lys-D-Ala-D-Ala)](n)-di-trans,octa-cis-undecaprenyl diphosphate + beta-D-GlcNAc-(1-&gt;4)-Mur2Ac(oyl-L-Ala-gamma-D-Glu-L-Lys-D-Ala-D-Ala)-di-trans,octa-cis-undecaprenyl diphosphate = [GlcNAc-(1-&gt;4)-Mur2Ac(oyl-L-Ala-gamma-D-Glu-L-Lys-D-Ala-D-Ala)](n+1)-di-trans,octa-cis-undecaprenyl diphosphate + di-trans,octa-cis-undecaprenyl diphosphate + H(+). It functions in the pathway cell wall biogenesis; peptidoglycan biosynthesis. In terms of biological role, peptidoglycan polymerase that is essential for cell division. The sequence is that of Probable peptidoglycan glycosyltransferase FtsW from Neisseria gonorrhoeae (strain NCCP11945).